Consider the following 416-residue polypeptide: Multifunctional CCA protein (416 aa).

ATP is bound by residues glycine 8 and arginine 11. The CTP site is built by glycine 8 and arginine 11. Aspartate 21 and aspartate 23 together coordinate Mg(2+). ATP-binding residues include arginine 91, arginine 137, and arginine 140. Residues arginine 91, arginine 137, and arginine 140 each contribute to the CTP site. Residues 228 to 329 enclose the HD domain; sequence TGLHTMLVLA…IKLFDKADFW (102 aa).

The protein belongs to the tRNA nucleotidyltransferase/poly(A) polymerase family. Bacterial CCA-adding enzyme type 1 subfamily. In terms of assembly, monomer. Can also form homodimers and oligomers. The cofactor is Mg(2+). Ni(2+) serves as cofactor.

It catalyses the reaction a tRNA precursor + 2 CTP + ATP = a tRNA with a 3' CCA end + 3 diphosphate. The catalysed reaction is a tRNA with a 3' CCA end + 2 CTP + ATP = a tRNA with a 3' CCACCA end + 3 diphosphate. Functionally, catalyzes the addition and repair of the essential 3'-terminal CCA sequence in tRNAs without using a nucleic acid template. Adds these three nucleotides in the order of C, C, and A to the tRNA nucleotide-73, using CTP and ATP as substrates and producing inorganic pyrophosphate. tRNA 3'-terminal CCA addition is required both for tRNA processing and repair. Also involved in tRNA surveillance by mediating tandem CCA addition to generate a CCACCA at the 3' terminus of unstable tRNAs. While stable tRNAs receive only 3'-terminal CCA, unstable tRNAs are marked with CCACCA and rapidly degraded. The chain is Multifunctional CCA protein from Shewanella sp. (strain ANA-3).